Here is a 199-residue protein sequence, read N- to C-terminus: Probable chemoreceptor glutamine deamidase CheD (199 aa).

This sequence belongs to the CheD family.

It carries out the reaction L-glutaminyl-[protein] + H2O = L-glutamyl-[protein] + NH4(+). Probably deamidates glutamine residues to glutamate on methyl-accepting chemotaxis receptors (MCPs), playing an important role in chemotaxis. The chain is Probable chemoreceptor glutamine deamidase CheD from Cereibacter sphaeroides (strain ATCC 17023 / DSM 158 / JCM 6121 / CCUG 31486 / LMG 2827 / NBRC 12203 / NCIMB 8253 / ATH 2.4.1.) (Rhodobacter sphaeroides).